Here is a 591-residue protein sequence, read N- to C-terminus: Aspartate--tRNA ligase (591 aa).

Position 176 (Glu176) interacts with L-aspartate. The segment at Gln200–Lys203 is aspartate. Arg222 contributes to the L-aspartate binding site. Residues Arg222–Glu224 and Gln231 contribute to the ATP site. Residue His450 coordinates L-aspartate. Glu484 contacts ATP. L-aspartate is bound at residue Arg491. Gly536–Arg539 provides a ligand contact to ATP.

The protein belongs to the class-II aminoacyl-tRNA synthetase family. Type 1 subfamily. Homodimer.

It localises to the cytoplasm. The enzyme catalyses tRNA(Asp) + L-aspartate + ATP = L-aspartyl-tRNA(Asp) + AMP + diphosphate. Catalyzes the attachment of L-aspartate to tRNA(Asp) in a two-step reaction: L-aspartate is first activated by ATP to form Asp-AMP and then transferred to the acceptor end of tRNA(Asp). The polypeptide is Aspartate--tRNA ligase (Listeria monocytogenes serovar 1/2a (strain ATCC BAA-679 / EGD-e)).